A 392-amino-acid polypeptide reads, in one-letter code: MEIKDIIINSNLMLPPPTILTINNKDDYTSFTFKGKSISVPRKQRITKKTIYACDINGTMFQTYNMDTNRLLIIKKISLLQFKNHLQGRMMLRNCHYQRFFNHHPFVSGFKVSKRKSLNIKTKNLIESPVDDGTDLYFEFDQSDFTLYQMIRSDKAASRKQCPYVLYQLLTTIKYINSAGVIHRSLDPKTIAVNKEYKTKLFDFSFSISTDYPTDIFFKDYEETPWPYRSPETIIMLKEFSFECDVWSIGVIFAELILGEQLFRGESKQSLLIEISELIGTPTYDECKESTNGFARNFILNIPLKSRHGGIKKRIPNATEEEIEILEGMLCWNPKKRWPIERIIQHPYFQNYCHIEQYKCDKKFSLGSPYVFHRLNAKEIKKIIEDEFVTQP.

Residues 46-349 (ITKKTIYACD…IERIIQHPYF (304 aa)) enclose the Protein kinase domain. ATP contacts are provided by residues 52–60 (YACDINGTM) and Lys-75.

This sequence belongs to the protein kinase superfamily. CMGC Ser/Thr protein kinase family. MAP kinase subfamily.

This chain is Probable inactive serine/threonine-protein kinase DDB_G0280855, found in Dictyostelium discoideum (Social amoeba).